A 471-amino-acid chain; its full sequence is 6-phosphogluconate dehydrogenase, decarboxylating (471 aa).

NADP(+)-binding positions include 10 to 15 (GLAVMG), 33 to 35 (NRT), 75 to 77 (VKA), and asparagine 103. Substrate-binding positions include asparagine 103 and 129–131 (SGG). Catalysis depends on lysine 183, which acts as the Proton acceptor. Residue 186-187 (HN) participates in substrate binding. Catalysis depends on glutamate 190, which acts as the Proton donor. Substrate-binding residues include tyrosine 191, lysine 263, arginine 290, arginine 449, and histidine 455.

It belongs to the 6-phosphogluconate dehydrogenase family. Homodimer.

The enzyme catalyses 6-phospho-D-gluconate + NADP(+) = D-ribulose 5-phosphate + CO2 + NADPH. Its pathway is carbohydrate degradation; pentose phosphate pathway; D-ribulose 5-phosphate from D-glucose 6-phosphate (oxidative stage): step 3/3. Its function is as follows. Catalyzes the oxidative decarboxylation of 6-phosphogluconate to ribulose 5-phosphate and CO(2), with concomitant reduction of NADP to NADPH. The sequence is that of 6-phosphogluconate dehydrogenase, decarboxylating (gnd) from Synechococcus elongatus (strain ATCC 33912 / PCC 7942 / FACHB-805) (Anacystis nidulans R2).